The following is a 280-amino-acid chain: Formyltetrahydrofolate deformylase (280 aa).

The 79-residue stretch at 8-86 folds into the ACT domain; sequence VLRTICPDQK…RELNPAGRRR (79 aa). D225 is a catalytic residue.

This sequence belongs to the PurU family.

The enzyme catalyses (6R)-10-formyltetrahydrofolate + H2O = (6S)-5,6,7,8-tetrahydrofolate + formate + H(+). Its pathway is purine metabolism; IMP biosynthesis via de novo pathway; formate from 10-formyl-5,6,7,8-tetrahydrofolate: step 1/1. Its function is as follows. Catalyzes the hydrolysis of 10-formyltetrahydrofolate (formyl-FH4) to formate and tetrahydrofolate (FH4). In Escherichia coli O6:H1 (strain CFT073 / ATCC 700928 / UPEC), this protein is Formyltetrahydrofolate deformylase.